The primary structure comprises 607 residues: Pyruvate decarboxylase 2 (607 aa).

The interval 1–22 (MDTKIGSIDACNPTNHDIGGPP) is disordered. Residues Asp-69 and His-156 each coordinate substrate. The tract at residues 434–516 (DSWFNCQKLK…FLINNGGYTI (83 aa)) is thiamine pyrophosphate binding. Mg(2+)-binding residues include Asp-484, Asn-511, and Gly-513. Glu-517 contacts substrate.

Belongs to the TPP enzyme family. As to quaternary structure, homotetramer. A metal cation serves as cofactor. The cofactor is thiamine diphosphate. As to expression, expressed at low levels in roots, shoots, flowers, siliques and seeds.

The enzyme catalyses a 2-oxocarboxylate + H(+) = an aldehyde + CO2. This Arabidopsis thaliana (Mouse-ear cress) protein is Pyruvate decarboxylase 2 (PDC2).